A 201-amino-acid polypeptide reads, in one-letter code: Imidazoleglycerol-phosphate dehydratase (201 aa).

Belongs to the imidazoleglycerol-phosphate dehydratase family.

Its subcellular location is the cytoplasm. It catalyses the reaction D-erythro-1-(imidazol-4-yl)glycerol 3-phosphate = 3-(imidazol-4-yl)-2-oxopropyl phosphate + H2O. It participates in amino-acid biosynthesis; L-histidine biosynthesis; L-histidine from 5-phospho-alpha-D-ribose 1-diphosphate: step 6/9. This Prochlorococcus marinus (strain AS9601) protein is Imidazoleglycerol-phosphate dehydratase.